The following is a 336-amino-acid chain: 3-hydroxyisobutyrate dehydrogenase, mitochondrial (336 aa).

A mitochondrion-targeting transit peptide spans 1-36 (MAASLRLLGAASGLRYWSRRLRPAAGSFAAVCSRSV). Residue 40 to 69 (TPVGFIGLGNMGNPMAKNLMKHGYPLIIYD) participates in NAD(+) binding. 2 positions are modified to N6-acetyllysine; alternate: lysine 60 and lysine 76. 2 positions are modified to N6-succinyllysine; alternate: lysine 60 and lysine 76. Position 95 is an N6-succinyllysine (lysine 95). NAD(+) is bound by residues 103–104 (LP) and asparagine 108. At lysine 121 the chain carries N6-acetyllysine. Threonine 134 contributes to the NAD(+) binding site. The residue at position 141 (lysine 141) is an N6-succinyllysine. Lysine 145 carries the post-translational modification N6-acetyllysine. Lysine 149 carries the post-translational modification N6-acetyllysine; alternate. At lysine 149 the chain carries N6-succinyllysine; alternate. Lysine 209 is a catalytic residue. N6-acetyllysine; alternate occurs at positions 238 and 242. N6-succinyllysine; alternate occurs at positions 238 and 242. Residue lysine 284 coordinates NAD(+). N6-succinyllysine is present on lysine 297. At lysine 321 the chain carries N6-acetyllysine; alternate. Position 321 is an N6-succinyllysine; alternate (lysine 321).

This sequence belongs to the HIBADH-related family. 3-hydroxyisobutyrate dehydrogenase subfamily. In terms of assembly, homodimer.

The protein localises to the mitochondrion. The enzyme catalyses 3-hydroxy-2-methylpropanoate + NAD(+) = 2-methyl-3-oxopropanoate + NADH + H(+). It participates in amino-acid degradation; L-valine degradation. In Pongo abelii (Sumatran orangutan), this protein is 3-hydroxyisobutyrate dehydrogenase, mitochondrial (HIBADH).